We begin with the raw amino-acid sequence, 188 residues long: Putative manganese efflux pump MntP (188 aa).

6 consecutive transmembrane segments (helical) span residues 3–23, 35–55, 70–90, 104–126, 140–160, and 167–187; these read LYALLLIALGMSMDAFAVALA, IAATALVFGTVEALTPLAGWV, WAAFVLLGGLGLKMMHEGLSG, WLTVLTAFGTSIDSMIVGVGLAF, MATTVLVAVGLTVGRALGVLF, and AGGLVLIAIGTWTLLSHLGLI.

This sequence belongs to the MntP (TC 9.B.29) family.

The protein resides in the cell inner membrane. In terms of biological role, probably functions as a manganese efflux pump. This chain is Putative manganese efflux pump MntP, found in Neisseria meningitidis serogroup C / serotype 2a (strain ATCC 700532 / DSM 15464 / FAM18).